The chain runs to 374 residues: Ribosomal RNA large subunit methyltransferase G (374 aa).

The protein belongs to the methyltransferase superfamily. RlmG family.

The protein localises to the cytoplasm. The catalysed reaction is guanosine(1835) in 23S rRNA + S-adenosyl-L-methionine = N(2)-methylguanosine(1835) in 23S rRNA + S-adenosyl-L-homocysteine + H(+). In terms of biological role, specifically methylates the guanine in position 1835 (m2G1835) of 23S rRNA. The polypeptide is Ribosomal RNA large subunit methyltransferase G (Pseudomonas putida (strain ATCC 700007 / DSM 6899 / JCM 31910 / BCRC 17059 / LMG 24140 / F1)).